The sequence spans 401 residues: Argininosuccinate synthase (401 aa).

Residue 9-17 (AYSGGLDTS) participates in ATP binding. Y87 is an L-citrulline binding site. Position 117 (G117) interacts with ATP. L-aspartate contacts are provided by T119, N123, and D124. N123 provides a ligand contact to L-citrulline. The L-citrulline site is built by R127, S176, S185, E261, and Y273.

The protein belongs to the argininosuccinate synthase family. Type 1 subfamily. Homotetramer.

The protein localises to the cytoplasm. The enzyme catalyses L-citrulline + L-aspartate + ATP = 2-(N(omega)-L-arginino)succinate + AMP + diphosphate + H(+). The protein operates within amino-acid biosynthesis; L-arginine biosynthesis; L-arginine from L-ornithine and carbamoyl phosphate: step 2/3. The polypeptide is Argininosuccinate synthase (Prosthecochloris aestuarii (strain DSM 271 / SK 413)).